We begin with the raw amino-acid sequence, 102 residues long: NADH-quinone oxidoreductase subunit K (102 aa).

A run of 3 helical transmembrane segments spans residues 6–26, 30–50, and 62–82; these read FEHA…ALLI, LIVM…AFIA, and VMFL…LGLG.

It belongs to the complex I subunit 4L family. As to quaternary structure, NDH-1 is composed of 14 different subunits. Subunits NuoA, H, J, K, L, M, N constitute the membrane sector of the complex.

The protein resides in the cell inner membrane. It catalyses the reaction a quinone + NADH + 5 H(+)(in) = a quinol + NAD(+) + 4 H(+)(out). Its function is as follows. NDH-1 shuttles electrons from NADH, via FMN and iron-sulfur (Fe-S) centers, to quinones in the respiratory chain. The immediate electron acceptor for the enzyme in this species is believed to be ubiquinone. Couples the redox reaction to proton translocation (for every two electrons transferred, four hydrogen ions are translocated across the cytoplasmic membrane), and thus conserves the redox energy in a proton gradient. In Methylococcus capsulatus (strain ATCC 33009 / NCIMB 11132 / Bath), this protein is NADH-quinone oxidoreductase subunit K.